The primary structure comprises 280 residues: 3-methyl-2-oxobutanoate hydroxymethyltransferase (280 aa).

Mg(2+)-binding residues include aspartate 49 and aspartate 88. 3-methyl-2-oxobutanoate is bound by residues aspartate 49–serine 50, aspartate 88, and lysine 118. Glutamate 120 provides a ligand contact to Mg(2+). The active-site Proton acceptor is glutamate 186.

The protein belongs to the PanB family. In terms of assembly, homodecamer; pentamer of dimers. Requires Mg(2+) as cofactor.

The protein localises to the cytoplasm. The enzyme catalyses 3-methyl-2-oxobutanoate + (6R)-5,10-methylene-5,6,7,8-tetrahydrofolate + H2O = 2-dehydropantoate + (6S)-5,6,7,8-tetrahydrofolate. It functions in the pathway cofactor biosynthesis; (R)-pantothenate biosynthesis; (R)-pantoate from 3-methyl-2-oxobutanoate: step 1/2. Catalyzes the reversible reaction in which hydroxymethyl group from 5,10-methylenetetrahydrofolate is transferred onto alpha-ketoisovalerate to form ketopantoate. The sequence is that of 3-methyl-2-oxobutanoate hydroxymethyltransferase from Ruegeria sp. (strain TM1040) (Silicibacter sp.).